The chain runs to 1874 residues: Protein TIC 214 (1874 aa).

Transmembrane regions (helical) follow at residues I18–G38, F64–L84, P87–H107, L124–L144, V172–I192, and I221–I241. 2 disordered regions span residues E248 to V310 and K1567 to D1624. Residues G255–T268 are compositionally biased toward acidic residues. Composition is skewed to basic and acidic residues over residues D298–V310 and N1584–A1601.

The protein belongs to the TIC214 family. Part of the Tic complex.

It localises to the plastid. It is found in the chloroplast inner membrane. Its function is as follows. Involved in protein precursor import into chloroplasts. May be part of an intermediate translocation complex acting as a protein-conducting channel at the inner envelope. This Coffea arabica (Arabian coffee) protein is Protein TIC 214.